Consider the following 141-residue polypeptide: Galactose-6-phosphate isomerase subunit LacA 1 (141 aa).

This sequence belongs to the LacAB/RpiB family. In terms of assembly, heteromultimeric protein consisting of LacA and LacB.

It catalyses the reaction aldehydo-D-galactose 6-phosphate = keto-D-tagatose 6-phosphate. It functions in the pathway carbohydrate metabolism; D-galactose 6-phosphate degradation; D-tagatose 6-phosphate from D-galactose 6-phosphate: step 1/1. In Streptococcus pyogenes serotype M6 (strain ATCC BAA-946 / MGAS10394), this protein is Galactose-6-phosphate isomerase subunit LacA 1.